The following is a 381-amino-acid chain: Creatine kinase M-type (381 aa).

The Phosphagen kinase N-terminal domain occupies 11–98; that stretch reads KLNYKPEEEY…FDPIISDRHG (88 aa). Residues 125 to 367 enclose the Phosphagen kinase C-terminal domain; sequence YVLSSRVRTG…KLMVEMEKKL (243 aa). An ATP-binding site is contributed by 128 to 132; sequence SSRVR. Phosphoserine is present on Ser164. A Phosphothreonine modification is found at Thr166. Ser178 is modified (phosphoserine). Residue Thr180 is modified to Phosphothreonine. An ATP-binding site is contributed by His191. Position 199 is a phosphoserine (Ser199). Residues Arg236 and Arg292 each coordinate ATP. Phosphothreonine occurs at positions 313 and 322. ATP contacts are provided by residues 320 to 325 and Asp335; that span reads RGTGGV. Residue Ser372 is modified to Phosphoserine.

Belongs to the ATP:guanido phosphotransferase family. Dimer of identical or non-identical chains, which can be either B (brain type) or M (muscle type). With MM being the major form in skeletal muscle and myocardium, MB existing in myocardium, and BB existing in many tissues, especially brain.

Its subcellular location is the cytoplasm. The enzyme catalyses creatine + ATP = N-phosphocreatine + ADP + H(+). Functionally, reversibly catalyzes the transfer of phosphate between ATP and various phosphogens (e.g. creatine phosphate). Creatine kinase isoenzymes play a central role in energy transduction in tissues with large, fluctuating energy demands, such as skeletal muscle, heart, brain and spermatozoa. This Homo sapiens (Human) protein is Creatine kinase M-type (CKM).